The primary structure comprises 1458 residues: Anaphase-promoting complex subunit 1 (1458 aa).

Positions 186–210 are disordered; the sequence is QSIKSSRNRRRESSFSREKNPDLTR. Basic and acidic residues predominate over residues 196–210; it reads RESSFSREKNPDLTR. 4 PC repeats span residues 873–895, 959–982, 1006–1024, and 1099–1124; these read GLLL…KLLS, AAGF…SDLK, GAIM…LEVA, and GICF…INFL.

It belongs to the APC1 family. The APC/C is composed of at least 13 subunits: apc1, apc2, nuc2, apc4, apc5, cut9, apc8, apc10, apc11, hcn1, apc13, apc14 and apc15.

Functionally, component of the anaphase-promoting complex/cyclosome (APC/C), a cell cycle-regulated E3 ubiquitin-protein ligase complex that controls progression through mitosis and the G1 phase of the cell cycle. The APC/C is thought to confer substrate specificity and, in the presence of ubiquitin-conjugating E2 enzymes, it catalyzes the formation of protein-ubiquitin conjugates that are subsequently degraded by the 26S proteasome. Mutations to this protein prevent the exit from mitosis. The chain is Anaphase-promoting complex subunit 1 (cut4) from Schizosaccharomyces pombe (strain 972 / ATCC 24843) (Fission yeast).